A 783-amino-acid polypeptide reads, in one-letter code: Transcription factor E4F1 (783 aa).

The segment at 40–84 (GFLGLPAPFSEEDEDDVHRCGRCQVEFTALEDFVQHKIQKTCHRA) is required for ubiquitin ligase activity. A Phosphoserine modification is found at S49. Residues 185 to 264 (LLVNKEGRYV…GKSFRESGAL (80 aa)) are mediates dimerization, DNA-binding, transcription repression of CCNA2 and interaction with HMGA2. 2 consecutive C2H2-type zinc fingers follow at residues 193–215 (YVCMLCHKTFKTGSILKAHMVTH) and 221–243 (HECKLCGASFRTKGSLIRHHRRH). The segment at 249 to 273 (YKCAKCGKSFRESGALTRHLKSLTP) adopts a C2H2-type 3; degenerate zinc-finger fold. Positions 368–565 (NLLHQAMQNS…REKGSLVRHV (198 aa)) are mediates interaction with CDKN2A. The interval 386–407 (GEESALEPAPPSGSSPQCLGDG) is disordered. 5 consecutive C2H2-type zinc fingers follow at residues 434–456 (HPCPQCSETFPTAATLEAHKRGH), 462–484 (FTCTQCGKAFPKAYLLKKHQEVH), 490–512 (FRCGDCGKLYKTIAHVRGHRRVH), 518–540 (FPCPQCGKRYKTKNAQQVHFRTH), and 546–568 (HVCQFCSRGFREKGSLVRHVRHH). Residues 434-598 (HPCPQCSETF…LNRHLRTKGG (165 aa)) are interaction with BMI1. A mediates interaction with TP53 region spans residues 520–579 (CPQCGKRYKTKNAQQVHFRTHLEEKPHVCQFCSRGFREKGSLVRHVRHHTGEKPFKCYKC). A C2H2-type 9; degenerate zinc finger spans residues 574–596 (FKCYKCGRGFAEHGTLNRHLRTK). Residues 574–596 (FKCYKCGRGFAEHGTLNRHLRTK) are mediates interaction with RASSF1.

As to quaternary structure, homodimer; binds DNA as a dimer. Forms a complex with CDKN2A and TP53. Interacts with HDAC1, HMGA2 and RASSF1. Interactions with TP53, RB1, ANP32A and probably BMI1 and FHL2 regulate E4F1 activity. Phosphorylated; phosphorylation is cell cycle-dependent and regulates DNA-binding activity and function. Post-translationally, may be sumoylated by UBE2I upon interaction with CDKN2A. Ubiquitously expressed.

It is found in the nucleus. The protein resides in the nucleoplasm. The protein localises to the cytoplasm. The enzyme catalyses S-ubiquitinyl-[E2 ubiquitin-conjugating enzyme]-L-cysteine + [acceptor protein]-L-lysine = [E2 ubiquitin-conjugating enzyme]-L-cysteine + N(6)-ubiquitinyl-[acceptor protein]-L-lysine.. It participates in protein modification; protein ubiquitination. May function as a transcriptional repressor. May also function as a ubiquitin ligase mediating ubiquitination of chromatin-associated TP53. Functions in cell survival and proliferation through control of the cell cycle. Functions in the p53 and pRB tumor suppressor pathways and regulates the cyclin CCNA2 transcription. The sequence is that of Transcription factor E4F1 (E4f1) from Mus musculus (Mouse).